A 565-amino-acid polypeptide reads, in one-letter code: MDDWENNDFIQRLDFSSCGEEGEDRSINEEDTLSSSPIKHCDFQKWNSPLPATPHRKLSEIFLSRTKSWVSPTLKSSPGVSRTHGNAETPLHITWKKLQLCDTPHTPKSLLSKTAFPSPGAKVPPKGFRHLRFTPGADLDDSTQASLVNINPFTPESYRQMLFLPNGKRKAREIKLVHLAQSFCEKAEVQRKDSAVRPADRCPLKDSNMVSRYQKEFLELERIGVGEFGSVYKCIKRLDGCVYAIKRSKRPLAGSSDEQLALREVYAHAVLGHHPHVVRYYSAWAEDDHMIIQNEHCNGGSLQDVLLENAKRGQYFPEAKLKEILLQVSMGLKYIHNSGLVHLDIKPSNIFICHKLVVEGQAGQEESDSDDEFSSGVMYKIGDLGHVTSIANPQVEEGDRRFLANEILQEQYFHLPKADIFALALTIALAAGAGPLPHNGAMWHHIRKGNIPSIPQKLPNGFIELLKLMIHPDPMERPSATALTKHPILRPSLGKAVQLQKQLNVEKCKTAMLERELKAARLAQTLMKDQPLGNANLQESETSPKKNNKRLVGGKNCRSFSFTVG.

Residues 217–493 (FLELERIGVG…TKHPILRPSL (277 aa)) enclose the Protein kinase domain. ATP-binding positions include 223-231 (IGVGEFGSV) and Lys-246. Asp-344 serves as the catalytic Proton acceptor. Positions 349 and 383 each coordinate Mg(2+). The stretch at 496–522 (AVQLQKQLNVEKCKTAMLERELKAARL) forms a coiled coil. The disordered stretch occupies residues 531–553 (PLGNANLQESETSPKKNNKRLVG).

It belongs to the protein kinase superfamily. Ser/Thr protein kinase family. WEE1 subfamily.

Its subcellular location is the nucleus. It carries out the reaction L-tyrosyl-[protein] + ATP = O-phospho-L-tyrosyl-[protein] + ADP + H(+). Oocyte-specific protein tyrosine kinase that phosphorylates and inhibits CDK1 and acts as a key regulator of meiosis. Required to maintain meiotic arrest in oocytes by phosphorylating CDK1 at 'Tyr-15', leading to inhibit CDK1 activity and prevent meiotic reentry. The chain is Wee1-like protein kinase 2 (WEE2) from Gallus gallus (Chicken).